The following is a 198-amino-acid chain: Host transcription reprogramming factor 1 (198 aa).

The N-terminal stretch at 1–19 (MQLSNFLSIWALVAMGATA) is a signal peptide. Disordered regions lie at residues 21 to 59 (PMPSGSAPGNPFADGEAYGARPSQGLTPVPKVHDGSYHS) and 71 to 198 (ERLA…PVQL). The segment at 58–81 (HSCETCAAPFRTEERLAAHRQADH) adopts a C2H2-type zinc-finger fold. Composition is skewed to basic and acidic residues over residues 71-80 (ERLAAHRQAD), 104-128 (TSERERLDRLASRVGEDYVEKRSQE), and 167-177 (KLDKPTRKEQY).

The protein resides in the secreted. It is found in the host nucleus. Its function is as follows. Secreted effector that translocates into the nuclei of host cells to reprogram the expression of immunity-associated genes by binding to effector binding elements (EBEs) in rice. Binds the 5'-CAATCTTC-3' EBE of promoters from targeted rice genes and probably recruits a yet to be determined host repressor. Causes ambivalent immunity with increased susceptibility to the hemibiotrophic pathogens Magnaporthe oryzae and Xanthomonas oryzae pv. oryzae, but enhances resistance to Cochliobolus miyabeanus, a necrotrophic pathogen. The protein is Host transcription reprogramming factor 1 of Pyricularia oryzae (strain 70-15 / ATCC MYA-4617 / FGSC 8958) (Rice blast fungus).